Here is a 514-residue protein sequence, read N- to C-terminus: Proline--tRNA ligase (514 aa).

Belongs to the class-II aminoacyl-tRNA synthetase family. ProS type 3 subfamily. Homodimer.

The protein localises to the cytoplasm. It carries out the reaction tRNA(Pro) + L-proline + ATP = L-prolyl-tRNA(Pro) + AMP + diphosphate. In terms of biological role, catalyzes the attachment of proline to tRNA(Pro) in a two-step reaction: proline is first activated by ATP to form Pro-AMP and then transferred to the acceptor end of tRNA(Pro). The protein is Proline--tRNA ligase of Erythrobacter litoralis (strain HTCC2594).